Consider the following 62-residue polypeptide: Guanine nucleotide-binding protein subunit gamma (62 aa).

A disordered region spans residues 40 to 62; the sequence is DMLVSGPTDQHNPFQEKKSCSVL. A compositionally biased stretch (basic and acidic residues) spans 53–62; it reads FQEKKSCSVL. Cysteine 59 bears the Cysteine methyl ester mark. Cysteine 59 carries the S-geranylgeranyl cysteine lipid modification. A propeptide spans 60–62 (removed in mature form); the sequence is SVL.

The protein belongs to the G protein gamma family. In terms of assembly, g proteins are composed of 3 units, alpha, beta and gamma. Interacts with gpb-1 and gpb-2. In terms of tissue distribution, predominantly expressed in the central nervous system.

The protein resides in the cell membrane. Its function is as follows. Guanine nucleotide-binding proteins (G proteins) are involved as a modulator or transducer in various transmembrane signaling systems. The beta and gamma chains are required for the GTPase activity, for replacement of GDP by GTP, and for G protein-effector interaction. The chain is Guanine nucleotide-binding protein subunit gamma (gpc-1) from Caenorhabditis elegans.